Here is a 373-residue protein sequence, read N- to C-terminus: NK1 transcription factor-related protein 1 (373 aa).

Disordered regions lie at residues Ala-49–Arg-74, Ser-149–Arg-231, and Lys-281–Thr-328. Over residues Glu-53–Pro-63 the composition is skewed to basic and acidic residues. The segment covering Glu-168–Asn-177 has biased composition (polar residues). Residues Gly-196–Gln-210 show a composition bias toward low complexity. Residues Pro-227–Asn-286 constitute a DNA-binding region (homeobox). The segment covering Ser-296 to Gly-310 has biased composition (gly residues).

It belongs to the NK-1 homeobox family.

Its subcellular location is the nucleus. Its function is as follows. May participate in the energy homeostasis regulation. This Danio rerio (Zebrafish) protein is NK1 transcription factor-related protein 1.